Consider the following 69-residue polypeptide: Antimicrobial peptide Eval36 (69 aa).

The signal sequence occupies residues 1–23 (MKAQFAILVISMMLLQLIVQTES). At leucine 37 the chain carries Leucine amide. A propeptide spanning residues 38-69 (GKRGLRNLDDFQDFLDSDTSDADLRMLRDMFR) is cleaved from the precursor.

This sequence belongs to the non-disulfide-bridged peptide (NDBP) superfamily. Short antimicrobial peptide (group 4) family. In terms of tissue distribution, expressed by the venom gland.

The protein resides in the secreted. Its function is as follows. Probable antimicrobial peptide. Shows low inhibitory activity against herpes simplex virus type 1 (HSV-1). This is Antimicrobial peptide Eval36 from Euscorpiops validus (Scorpion).